We begin with the raw amino-acid sequence, 354 residues long: MKVAILGAGCYRTHAASGITNFSRAAQVAKEVGIPEITMTHSTITMGAELLHLIPEITEVVVSDPCFAEEPGIVVLDQFDYKTVMEAHLAGDAEKVMPEIREAVKAKAKETPKPPKGCIHFVHPETIGLKVTASDVEAVKNADIVITWLPKGGSQPAIIEKFVGAIKKGAIVTHACTIPTPKFAKIFKDMGRDDLNIIAYHPGAVPEMKGQAFLSEGLADAEKVEEFYCMAKTARGEAFKMPANLISPVCDMGSAVTAPVYAGILAYRDAVTQILGAPADFAQMMADEAITQLLELMRSEGIKNMEDKLNPKALTGTADSMCFGPLADILPTSLKVLEKHTNENKCECSCSIKP.

The protein belongs to the HMD family.

The enzyme catalyses 5,10-methenyl-5,6,7,8-tetrahydromethanopterin + H2 = 5,10-methylenetetrahydromethanopterin + H(+). It functions in the pathway one-carbon metabolism; methanogenesis from CO(2); 5,10-methylene-5,6,7,8-tetrahydromethanopterin from 5,10-methenyl-5,6,7,8-tetrahydromethanopterin (hydrogen route): step 1/1. Catalyzes the reversible reduction of methenyl-H(4)MPT(+) to methylene-H(4)MPT. In Methanococcus maripaludis (strain C5 / ATCC BAA-1333), this protein is 5,10-methenyltetrahydromethanopterin hydrogenase.